Reading from the N-terminus, the 208-residue chain is Outer-membrane lipoprotein LolB (208 aa).

An N-terminal signal peptide occupies residues 1–21 (MLSSKRRLMRLLPLASLLLTA). A lipid anchor (N-palmitoyl cysteine) is attached at Cys-22. A lipid anchor (S-diacylglycerol cysteine) is attached at Cys-22.

Belongs to the LolB family. Monomer.

The protein localises to the cell outer membrane. In terms of biological role, plays a critical role in the incorporation of lipoproteins in the outer membrane after they are released by the LolA protein. The sequence is that of Outer-membrane lipoprotein LolB from Erwinia tasmaniensis (strain DSM 17950 / CFBP 7177 / CIP 109463 / NCPPB 4357 / Et1/99).